The primary structure comprises 117 residues: uncharacterized protein (117 aa).

This is an uncharacterized protein from Pasteurella multocida (strain Pm70).